Consider the following 412-residue polypeptide: Tyrosine--tRNA ligase (412 aa).

Residue Tyr-38 participates in L-tyrosine binding. Residues 43–52 (CTANSLHIGS) carry the 'HIGH' region motif. The L-tyrosine site is built by Tyr-170 and Gln-174. The short motif at 230–234 (KMGKT) is the 'KMSKS' region element. Position 233 (Lys-233) interacts with ATP. The S4 RNA-binding domain occupies 343–409 (IPISKLLHMW…CGKKRRLKVV (67 aa)).

This sequence belongs to the class-I aminoacyl-tRNA synthetase family. TyrS type 1 subfamily. In terms of assembly, homodimer.

Its subcellular location is the cytoplasm. The catalysed reaction is tRNA(Tyr) + L-tyrosine + ATP = L-tyrosyl-tRNA(Tyr) + AMP + diphosphate + H(+). Functionally, catalyzes the attachment of tyrosine to tRNA(Tyr) in a two-step reaction: tyrosine is first activated by ATP to form Tyr-AMP and then transferred to the acceptor end of tRNA(Tyr). The sequence is that of Tyrosine--tRNA ligase from Anaplasma phagocytophilum (strain HZ).